Reading from the N-terminus, the 536-residue chain is Protein GvpD1 (536 aa).

39–46 (GAPGTGKT) serves as a coordination point for ATP. Residues 352–413 (GPSDSADRYD…SDQPHPIDED (62 aa)) are disordered. A compositionally biased stretch (polar residues) spans 363 to 372 (PDSTESFSEM). Residues 373-385 (ATTTPPDDAPTAT) show a composition bias toward low complexity. The span at 386–396 (HETDGADDGSR) shows a compositional bias: basic and acidic residues.

The protein belongs to the gas vesicle GvpD family. In terms of assembly, interacts with GvpE.

Its subcellular location is the cytoplasm. In terms of biological role, causes a decrease in the amount of GvpE protein. The 5'-region of its promoter or mRNA has a repressive function on downstream genes. Gas vesicles are hollow, gas filled proteinaceous nanostructures found in several microbial planktonic microorganisms. They allow positioning of halobacteria at the optimal depth for growth in the poorly aerated, shallow brine pools of their habitat. Expression of a 9.5 kb p-vac DNA fragment containing 2 divergently transcribed regions (gvpD-gvpE-gvpF-gvpG-gvpH-gvpI-gvpJ-gvpK-gvpL-gvpM and gvpA-gvpC-gvpN-gvpO) allows H.volcanii to produce gas vesicles. A similar region restores gas vesicle production in H.halobium without the p-vac locus, but it still has the c-vac locus. The polypeptide is Protein GvpD1 (gvpD11) (Halobacterium salinarum (strain ATCC 700922 / JCM 11081 / NRC-1) (Halobacterium halobium)).